A 226-amino-acid polypeptide reads, in one-letter code: 3-dehydroquinate dehydratase (226 aa).

3-dehydroquinate contacts are provided by residues serine 21, 42–44, and arginine 70; that span reads EVR. Residue histidine 124 is the Proton donor/acceptor of the active site. Lysine 149 functions as the Schiff-base intermediate with substrate in the catalytic mechanism. Arginine 187, threonine 206, and glutamine 210 together coordinate 3-dehydroquinate.

This sequence belongs to the type-I 3-dehydroquinase family. In terms of assembly, homodimer.

The enzyme catalyses 3-dehydroquinate = 3-dehydroshikimate + H2O. Its pathway is metabolic intermediate biosynthesis; chorismate biosynthesis; chorismate from D-erythrose 4-phosphate and phosphoenolpyruvate: step 3/7. Involved in the third step of the chorismate pathway, which leads to the biosynthesis of aromatic amino acids. Catalyzes the cis-dehydration of 3-dehydroquinate (DHQ) and introduces the first double bond of the aromatic ring to yield 3-dehydroshikimate. This is 3-dehydroquinate dehydratase from Methanothrix thermoacetophila (strain DSM 6194 / JCM 14653 / NBRC 101360 / PT) (Methanosaeta thermophila).